Consider the following 238-residue polypeptide: 15,16-dihydrobiliverdin:ferredoxin oxidoreductase (238 aa).

It belongs to the HY2 family.

The enzyme catalyses 15,16-dihydrobiliverdin + oxidized 2[4Fe-4S]-[ferredoxin] = biliverdin IXalpha + reduced 2[4Fe-4S]-[ferredoxin] + 2 H(+). Functionally, catalyzes the two-electron reduction of biliverdin IX-alpha at the C15 methine bridge. The sequence is that of 15,16-dihydrobiliverdin:ferredoxin oxidoreductase from Prochlorococcus marinus (strain NATL2A).